The primary structure comprises 460 residues: Putative E3 ubiquitin-protein ligase RING1b (460 aa).

Residues 1–85 (MPSLKSFSAA…SQSSSAGELS (85 aa)) are disordered. A compositionally biased stretch (basic and acidic residues) spans 21–31 (SEAERFNPEAV). 2 stretches are compositionally biased toward acidic residues: residues 32-51 (EKEE…DEED) and 59-71 (EAED…EEED). The segment at 103-143 (CSICLGIIRKTRTVMECLHRFCRECIDKSMRLGNNECPTCR) adopts an RING-type zinc-finger fold. A disordered region spans residues 196–300 (QVSQRQSKAL…TEQTHQRDSR (105 aa)). Positions 220–234 (RSRRSGGGSRRRRNC) are enriched in basic residues. The span at 240–249 (DTSEANDDDD) shows a compositional bias: acidic residues. Residues 250–265 (QNKRGKDSSSDEPCER) are compositionally biased toward basic and acidic residues. Residues 276 to 290 (SSSNANNNDNCAGNG) are compositionally biased toward low complexity.

As to quaternary structure, heterodimer with RING1A. Interacts with CLF. Component of the PRC1-like complex, at least composed of RING1A, RING1B and LHP1.

It localises to the nucleus. It catalyses the reaction S-ubiquitinyl-[E2 ubiquitin-conjugating enzyme]-L-cysteine + [acceptor protein]-L-lysine = [E2 ubiquitin-conjugating enzyme]-L-cysteine + N(6)-ubiquitinyl-[acceptor protein]-L-lysine.. The protein operates within protein modification; protein ubiquitination. Functionally, putative E3 ubiquitin-protein ligase that mediates monoubiquitination of 'Lys-119' of histone H2A (H2AK119ub), thereby playing a central role in histone code and gene regulation. In terms of biological role, as part of the PRC1-like complex, repress class I KNOX gene expression. PcG PRC1 complex maintains the transcriptionally repressive state of many genes, including Hox genes, throughout development. PcG PRC1 complex acts via chromatin remodeling and modification of histones, rendering chromatin heritably changed in its expressibility. In Arabidopsis thaliana (Mouse-ear cress), this protein is Putative E3 ubiquitin-protein ligase RING1b (RING1B).